Consider the following 162-residue polypeptide: NADH-quinone oxidoreductase subunit C (162 aa).

The protein belongs to the complex I 30 kDa subunit family. NDH-1 is composed of 14 different subunits. Subunits NuoB, C, D, E, F, and G constitute the peripheral sector of the complex.

The protein resides in the cell inner membrane. The enzyme catalyses a quinone + NADH + 5 H(+)(in) = a quinol + NAD(+) + 4 H(+)(out). NDH-1 shuttles electrons from NADH, via FMN and iron-sulfur (Fe-S) centers, to quinones in the respiratory chain. The immediate electron acceptor for the enzyme in this species is believed to be ubiquinone. Couples the redox reaction to proton translocation (for every two electrons transferred, four hydrogen ions are translocated across the cytoplasmic membrane), and thus conserves the redox energy in a proton gradient. The chain is NADH-quinone oxidoreductase subunit C from Geobacter sulfurreducens (strain ATCC 51573 / DSM 12127 / PCA).